We begin with the raw amino-acid sequence, 259 residues long: Phosphate import ATP-binding protein PstB (259 aa).

Positions 13 to 254 (IQVRDLNFYY…PAQRQTEDYI (242 aa)) constitute an ABC transporter domain. 45-52 (GPSGCGKS) lines the ATP pocket.

This sequence belongs to the ABC transporter superfamily. Phosphate importer (TC 3.A.1.7) family. As to quaternary structure, the complex is composed of two ATP-binding proteins (PstB), two transmembrane proteins (PstC and PstA) and a solute-binding protein (PstS).

Its subcellular location is the cell inner membrane. The catalysed reaction is phosphate(out) + ATP + H2O = ADP + 2 phosphate(in) + H(+). Its function is as follows. Part of the ABC transporter complex PstSACB involved in phosphate import. Responsible for energy coupling to the transport system. The chain is Phosphate import ATP-binding protein PstB from Edwardsiella tarda.